Consider the following 279-residue polypeptide: Putative polysaccharide deacetylase YxkH (279 aa).

An N-terminal signal peptide occupies residues 1–19; sequence MKRLFLSIFLLGSCLALAA. Cys20 carries the N-palmitoyl cysteine lipid modification. The S-diacylglycerol cysteine moiety is linked to residue Cys20. The interval 29-51 is disordered; sequence QPMPKAEQKKPEKKAVQVQKKED. Positions 34 to 51 are enriched in basic and acidic residues; it reads AEQKKPEKKAVQVQKKED. The NodB homology domain occupies 119 to 279; that stretch reads KCVLITFDDG…AFGAYIESMK (161 aa).

The protein belongs to the polysaccharide deacetylase family.

The protein resides in the cell membrane. This Bacillus subtilis (strain 168) protein is Putative polysaccharide deacetylase YxkH (yxkH).